Reading from the N-terminus, the 369-residue chain is 3,7-dimethylxanthine N-methyltransferase TCS1 (369 aa).

Y24 is an S-adenosyl-L-homocysteine binding site. T31 contributes to the caffeine binding site. 6 residues coordinate S-adenosyl-L-homocysteine: C66, N71, D103, L104, S138, and F139. Caffeine contacts are provided by Y156, H159, and W160. N177 contributes to the Mg(2+) binding site. R225 contacts caffeine. Positions 263, 265, and 266 each coordinate Mg(2+). F321 is a caffeine binding site.

This sequence belongs to the methyltransferase superfamily. Type-7 methyltransferase family. Mg(2+) serves as cofactor. Expressed in young leaves and flowers.

The catalysed reaction is 7-methylxanthine + S-adenosyl-L-methionine = theobromine + S-adenosyl-L-homocysteine + H(+). It catalyses the reaction theobromine + S-adenosyl-L-methionine = caffeine + S-adenosyl-L-homocysteine + H(+). The enzyme catalyses 1,7-dimethylxanthine + S-adenosyl-L-methionine = caffeine + S-adenosyl-L-homocysteine + H(+). The protein operates within alkaloid biosynthesis. Its function is as follows. Involved in the biosynthesis of caffeine. Catalyzes the conversion of 7-methylxanthine (7mX) to theobromine and of theobromine to caffeine. Has 3-N- and 1-N-methylation activity. In Camellia sinensis (Tea plant), this protein is 3,7-dimethylxanthine N-methyltransferase TCS1.